The primary structure comprises 105 residues: Replication restart protein PriB (105 aa).

Residues 1–102 (MTANRLTLSG…LHAEQIELID (102 aa)) form the SSB domain.

The protein belongs to the PriB family. Homodimer. Interacts with PriA and DnaT. Component of the replication restart primosome. Primosome assembly occurs via a 'hand-off' mechanism. PriA binds to replication forks, subsequently PriB then DnaT bind; DnaT then displaces ssDNA to generate the helicase loading substrate.

Functionally, involved in the restart of stalled replication forks, which reloads the replicative helicase on sites other than the origin of replication; the PriA-PriB pathway is the major replication restart pathway. During primosome assembly it facilitates complex formation between PriA and DnaT on DNA; stabilizes PriA on DNA. Stimulates the DNA unwinding activity of PriA helicase. This chain is Replication restart protein PriB, found in Serratia proteamaculans (strain 568).